We begin with the raw amino-acid sequence, 301 residues long: NTE family protein RssA (301 aa).

The 161-residue stretch at 8-168 folds into the PNPLA domain; that stretch reads LALGSGAARG…VNPIPISLTR (161 aa). Positions 39–43 match the GXSXG motif; sequence GCSIG. Residue Ser41 is the Nucleophile of the active site. Residue Asp155 is the Proton acceptor of the active site. The DGA/G signature appears at 155-157; that stretch reads DGA.

It belongs to the NTE family.

The sequence is that of NTE family protein RssA (rssA) from Escherichia coli (strain K12).